A 250-amino-acid polypeptide reads, in one-letter code: Flavin-dependent thymidylate synthase (250 aa).

A ThyX domain is found at 7-233 (LRVQLIAKTE…PAVFADFEVT (227 aa)). Residues 92-95 (ELIR), 103-107 (QLSQR), and Arg172 contribute to the dUMP site. Residues 95 to 97 (RHR) and Gln103 each bind FAD. A ThyX motif motif is present at residues 95–105 (RHRHFSYSQLS). Residues 188–190 (NYR) and His194 each bind FAD. Arg199 contributes to the dUMP binding site. Arg199 acts as the Involved in ionization of N3 of dUMP, leading to its activation in catalysis.

This sequence belongs to the thymidylate synthase ThyX family. In terms of assembly, homotetramer. The cofactor is FAD.

The catalysed reaction is dUMP + (6R)-5,10-methylene-5,6,7,8-tetrahydrofolate + NADPH + H(+) = dTMP + (6S)-5,6,7,8-tetrahydrofolate + NADP(+). Its pathway is pyrimidine metabolism; dTTP biosynthesis. In terms of biological role, catalyzes the reductive methylation of 2'-deoxyuridine-5'-monophosphate (dUMP) to 2'-deoxythymidine-5'-monophosphate (dTMP) while utilizing 5,10-methylenetetrahydrofolate (mTHF) as the methyl donor, and NADPH and FADH(2) as the reductant. This chain is Flavin-dependent thymidylate synthase, found in Mycobacterium marinum (strain ATCC BAA-535 / M).